Reading from the N-terminus, the 421-residue chain is MDKLIITGGVRLDGEIRISGAKNSALPILAATLLCDGPVTVANLPHLHDITTMIELFGRMGIEPVIDEKLSVEIDPRTIKTLVAPYELVKTMRASILVLGPMVARFGEAEVALPGGCAIGSRPVDLHIRGLEAMGAVIDVEGGYIKAKAPEGGLRGANFFFDTVSVTGTENIMMAAALARGRSVLQNAAREPEVVDLANFLIAMGAKISGAGTDTITIDGVERLHSAIYKVMPDRIETGTYLVAAAVTGGRVKVKDTDPTILEAVLEKLKEAGAEVTTGSDWIELNMHGKRPKAVNVRTAPYPAFPTDMQAQFISLNAIAEGTGAVIETIFENRFMHVYELHRMGAKIQVEGNTAIVTGTEILKGAPVMATDLRASASLVISALMAEGDTLIDRIYHIDRGYECIEEKLQMLGAKIRRVPG.

Residue 22–23 participates in phosphoenolpyruvate binding; it reads KN. Arg93 contributes to the UDP-N-acetyl-alpha-D-glucosamine binding site. The active-site Proton donor is Cys117. Cys117 bears the 2-(S-cysteinyl)pyruvic acid O-phosphothioketal mark. UDP-N-acetyl-alpha-D-glucosamine-binding positions include 122–126, Asp308, and Ile330; that span reads RPVDL.

This sequence belongs to the EPSP synthase family. MurA subfamily.

It localises to the cytoplasm. It catalyses the reaction phosphoenolpyruvate + UDP-N-acetyl-alpha-D-glucosamine = UDP-N-acetyl-3-O-(1-carboxyvinyl)-alpha-D-glucosamine + phosphate. It functions in the pathway cell wall biogenesis; peptidoglycan biosynthesis. In terms of biological role, cell wall formation. Adds enolpyruvyl to UDP-N-acetylglucosamine. The sequence is that of UDP-N-acetylglucosamine 1-carboxyvinyltransferase from Pseudomonas fluorescens (strain ATCC BAA-477 / NRRL B-23932 / Pf-5).